The sequence spans 820 residues: Trimethylamine-N-oxide reductase (820 aa).

Residues M1–A33 constitute a signal peptide (tat-type signal). S179 contributes to the Mo-bis(molybdopterin guanine dinucleotide) binding site.

It belongs to the prokaryotic molybdopterin-containing oxidoreductase family. Mo-bis(molybdopterin guanine dinucleotide) serves as cofactor. In terms of processing, predicted to be exported by the Tat system. The position of the signal peptide cleavage has not been experimentally proven.

It localises to the periplasm. The enzyme catalyses trimethylamine + 2 Fe(III)-[cytochrome c] + H2O = trimethylamine N-oxide + 2 Fe(II)-[cytochrome c] + 3 H(+). In terms of biological role, reduces trimethylamine-N-oxide (TMAO) into trimethylamine; an anaerobic reaction coupled to energy-yielding reactions. This chain is Trimethylamine-N-oxide reductase (torA), found in Vibrio vulnificus (strain YJ016).